The chain runs to 303 residues: Sporulation regulatory protein (303 aa).

The FtsK domain occupies 26–213; that stretch reads TGRLRAGLRK…HRVNDKQTAE (188 aa). Residue 43 to 50 coordinates ATP; the sequence is GANHSGKS.

In terms of biological role, involved in sporulation inhibition and pock formation. This Streptomyces azureus protein is Sporulation regulatory protein (spi).